A 367-amino-acid chain; its full sequence is Phosphoribosylaminoimidazole-succinocarboxamide synthase (367 aa).

It belongs to the SAICAR synthetase family.

It carries out the reaction 5-amino-1-(5-phospho-D-ribosyl)imidazole-4-carboxylate + L-aspartate + ATP = (2S)-2-[5-amino-1-(5-phospho-beta-D-ribosyl)imidazole-4-carboxamido]succinate + ADP + phosphate + 2 H(+). Its pathway is purine metabolism; IMP biosynthesis via de novo pathway; 5-amino-1-(5-phospho-D-ribosyl)imidazole-4-carboxamide from 5-amino-1-(5-phospho-D-ribosyl)imidazole-4-carboxylate: step 1/2. The chain is Phosphoribosylaminoimidazole-succinocarboxamide synthase from Shewanella baltica (strain OS195).